The primary structure comprises 247 residues: Carboxy-S-adenosyl-L-methionine synthase (247 aa).

Residues Tyr-39, Gly-64–Ser-66, Asp-117–Ile-118, Asn-132, and Arg-199 each bind S-adenosyl-L-methionine.

The protein belongs to the class I-like SAM-binding methyltransferase superfamily. Cx-SAM synthase family. In terms of assembly, homodimer.

It catalyses the reaction prephenate + S-adenosyl-L-methionine = carboxy-S-adenosyl-L-methionine + 3-phenylpyruvate + H2O. In terms of biological role, catalyzes the conversion of S-adenosyl-L-methionine (SAM) to carboxy-S-adenosyl-L-methionine (Cx-SAM). In Aeromonas salmonicida (strain A449), this protein is Carboxy-S-adenosyl-L-methionine synthase.